We begin with the raw amino-acid sequence, 160 residues long: Large ribosomal subunit protein uL16 (160 aa).

The interval 138–160 (KNLEAPSQEKTKNSKKSQEEVKQ) is disordered.

This sequence belongs to the universal ribosomal protein uL16 family. In terms of assembly, part of the 50S ribosomal subunit.

Its function is as follows. Binds 23S rRNA and is also seen to make contacts with the A and possibly P site tRNAs. This is Large ribosomal subunit protein uL16 from Prochlorococcus marinus (strain MIT 9215).